A 1493-amino-acid chain; its full sequence is Pleckstrin homology domain-containing family H member 2 (1493 aa).

A coiled-coil region spans residues 20 to 175 (LESQLMKFRV…LQEVQGKKSS (156 aa)). Disordered stretches follow at residues 202-230 (SPPQ…DMEE), 245-335 (NNRG…SSSI), 363-439 (LNSP…LPPP), and 613-705 (SSSP…EPLE). Basic and acidic residues predominate over residues 208 to 230 (KSEEMSKISSKEPEFTEGKDMEE). 2 stretches are compositionally biased toward polar residues: residues 245–260 (NNRG…CGSE) and 267–281 (TSFA…NSGA). Basic and acidic residues predominate over residues 374–388 (LSKKEQDSSSDELNK). 3 stretches are compositionally biased toward polar residues: residues 389-409 (KFQS…TPSP), 421-432 (NSLSGKGTQLVP), and 676-698 (STDT…SSDN). 2 consecutive PH domains span residues 703 to 797 (PLEK…NVLR) and 811 to 919 (KPTM…VAAG). Residues 955–1110 (HSKEGIISPL…PSRMEILSTL (156 aa)) enclose the MyTH4 domain. Residues 1121 to 1451 (FSIPVHFMNG…SYINNFHQQK (331 aa)) form the FERM domain. A disordered region spans residues 1474 to 1493 (MMGSQPLLSSSRPTKGPTLL).

As to quaternary structure, self-associates. Interacts with TGFB1I1. As to expression, kidney. Reduced expression in patients with focal segmental glomerulosclerosis.

It localises to the cytoplasm. It is found in the cytoskeleton. The protein resides in the cell membrane. Its subcellular location is the cell projection. The protein localises to the lamellipodium. Its function is as follows. In the kidney glomerulus may play a role in linking podocyte foot processes to the glomerular basement membrane. May be involved in stabilization of F-actin by attenuating its depolymerization. Can recruit TGFB1I1 from focal adhesions to podocyte lamellipodia. In Homo sapiens (Human), this protein is Pleckstrin homology domain-containing family H member 2 (PLEKHH2).